A 321-amino-acid chain; its full sequence is Small ribosomal subunit biogenesis GTPase RsgA (321 aa).

Residues 89 to 248 enclose the CP-type G domain; it reads QSWINRPPVA…VADTPGFNRP (160 aa). GTP contacts are provided by residues 138–141 and 190–198; these read TKRD and GPSGVGKTS. Residues Cys273, Cys278, His280, and Cys286 each contribute to the Zn(2+) site.

Belongs to the TRAFAC class YlqF/YawG GTPase family. RsgA subfamily. In terms of assembly, monomer. Associates with 30S ribosomal subunit, binds 16S rRNA. Requires Zn(2+) as cofactor.

It is found in the cytoplasm. Its function is as follows. One of several proteins that assist in the late maturation steps of the functional core of the 30S ribosomal subunit. Helps release RbfA from mature subunits. May play a role in the assembly of ribosomal proteins into the subunit. Circularly permuted GTPase that catalyzes slow GTP hydrolysis, GTPase activity is stimulated by the 30S ribosomal subunit. This chain is Small ribosomal subunit biogenesis GTPase RsgA, found in Prochlorococcus marinus (strain MIT 9313).